A 184-amino-acid polypeptide reads, in one-letter code: UPF0301 protein RHOS4_26140 (184 aa).

The protein belongs to the UPF0301 (AlgH) family.

The protein is UPF0301 protein RHOS4_26140 of Cereibacter sphaeroides (strain ATCC 17023 / DSM 158 / JCM 6121 / CCUG 31486 / LMG 2827 / NBRC 12203 / NCIMB 8253 / ATH 2.4.1.) (Rhodobacter sphaeroides).